We begin with the raw amino-acid sequence, 444 residues long: uncharacterized protein (444 aa).

Lys268 bears the N6-(pyridoxal phosphate)lysine mark.

It belongs to the class-III pyridoxal-phosphate-dependent aminotransferase family. The cofactor is pyridoxal 5'-phosphate.

This is an uncharacterized protein from Bacillus subtilis (strain 168).